Here is a 106-residue protein sequence, read N- to C-terminus: Iron-sulfur cluster assembly protein CyaY (106 aa).

It belongs to the frataxin family.

Functionally, involved in iron-sulfur (Fe-S) cluster assembly. May act as a regulator of Fe-S biogenesis. The polypeptide is Iron-sulfur cluster assembly protein CyaY (Pectobacterium carotovorum subsp. carotovorum (strain PC1)).